Consider the following 369-residue polypeptide: Glutamate 5-kinase (369 aa).

Lys8 serves as a coordination point for ATP. Residues Ser49, Asp136, and Asn148 each coordinate substrate. ATP contacts are provided by residues 168–169 (TD) and 211–217 (TGGMATK). The PUA domain maps to 276–354 (KGELWLDEGA…TELANILGYA (79 aa)).

This sequence belongs to the glutamate 5-kinase family.

It localises to the cytoplasm. The catalysed reaction is L-glutamate + ATP = L-glutamyl 5-phosphate + ADP. The protein operates within amino-acid biosynthesis; L-proline biosynthesis; L-glutamate 5-semialdehyde from L-glutamate: step 1/2. Its function is as follows. Catalyzes the transfer of a phosphate group to glutamate to form L-glutamate 5-phosphate. This is Glutamate 5-kinase from Thermosynechococcus vestitus (strain NIES-2133 / IAM M-273 / BP-1).